The following is a 270-amino-acid chain: Formamidopyrimidine-DNA glycosylase (270 aa).

The Schiff-base intermediate with DNA role is filled by P2. E3 acts as the Proton donor in catalysis. The active-site Proton donor; for beta-elimination activity is K58. DNA-binding residues include H91, R110, and R151. The FPG-type zinc-finger motif lies at 236 to 270; sequence LVYGRDGLPCPNCGRALKHATIGQRASVWCSHCQR. Residue R260 is the Proton donor; for delta-elimination activity of the active site.

Belongs to the FPG family. As to quaternary structure, monomer. It depends on Zn(2+) as a cofactor.

It catalyses the reaction Hydrolysis of DNA containing ring-opened 7-methylguanine residues, releasing 2,6-diamino-4-hydroxy-5-(N-methyl)formamidopyrimidine.. The enzyme catalyses 2'-deoxyribonucleotide-(2'-deoxyribose 5'-phosphate)-2'-deoxyribonucleotide-DNA = a 3'-end 2'-deoxyribonucleotide-(2,3-dehydro-2,3-deoxyribose 5'-phosphate)-DNA + a 5'-end 5'-phospho-2'-deoxyribonucleoside-DNA + H(+). Its function is as follows. Involved in base excision repair of DNA damaged by oxidation or by mutagenic agents. Acts as a DNA glycosylase that recognizes and removes damaged bases. Has a preference for oxidized purines, such as 7,8-dihydro-8-oxoguanine (8-oxoG). Has AP (apurinic/apyrimidinic) lyase activity and introduces nicks in the DNA strand. Cleaves the DNA backbone by beta-delta elimination to generate a single-strand break at the site of the removed base with both 3'- and 5'-phosphates. The sequence is that of Formamidopyrimidine-DNA glycosylase from Stenotrophomonas maltophilia (strain R551-3).